The following is a 634-amino-acid chain: Chaperone protein HtpG (634 aa).

The segment at 1–344 (MSETATQNKE…SNDLPLNVSR (344 aa)) is a; substrate-binding. The interval 345-561 (EILQDNKVTQ…DFEMGTQMAK (217 aa)) is b. A c region spans residues 562-634 (LLEAAGQAAP…GAINELLTKR (73 aa)).

This sequence belongs to the heat shock protein 90 family. In terms of assembly, homodimer.

Its subcellular location is the cytoplasm. In terms of biological role, molecular chaperone. Has ATPase activity. This Vibrio atlanticus (strain LGP32) (Vibrio splendidus (strain Mel32)) protein is Chaperone protein HtpG.